A 1067-amino-acid chain; its full sequence is Mediator of RNA polymerase II transcription subunit 5 (1067 aa).

It belongs to the Mediator complex subunit 5 family. As to quaternary structure, component of the Mediator complex.

It is found in the nucleus. In terms of biological role, component of the Mediator complex, a coactivator involved in the regulated transcription of nearly all RNA polymerase II-dependent genes. Mediator functions as a bridge to convey information from gene-specific regulatory proteins to the basal RNA polymerase II transcription machinery. Mediator is recruited to promoters by direct interactions with regulatory proteins and serves as a scaffold for the assembly of a functional preinitiation complex with RNA polymerase II and the general transcription factors. This is Mediator of RNA polymerase II transcription subunit 5 (NUT1) from Kluyveromyces lactis (strain ATCC 8585 / CBS 2359 / DSM 70799 / NBRC 1267 / NRRL Y-1140 / WM37) (Yeast).